Consider the following 382-residue polypeptide: NADH-ubiquinone oxidoreductase chain 2 (382 aa).

The next 12 helical transmembrane spans lie at 1–21, 33–53, 54–74, 88–108, 123–143, 158–178, 188–208, 212–232, 239–259, 260–280, 284–304, and 305–325; these read MIELDLCFGLLLLILFGLLSL, FICQCWLVMITPLEVQDFALC, ILTVVLLQSFHSFEALLFLLL, LVSFYVCLEAQTLCVVVLCGL, LKFLLLSAMVSGMALFWFSAM, FWILLVMLFKLGVAPMHMWSV, LLLYLSTAPKLSLFTFWASSW, FSVGVFILFSMFIGSIGAYGQ, FAYSTINEIGLLLLAVETAGF, HTLYQHLGIYIITQLLLWNLT, LFALCAVSLAGLPPFAGFFGK, and AWIFWHAMSVQAFSLLAAALF.

This sequence belongs to the complex I subunit 2 family.

It localises to the mitochondrion inner membrane. The enzyme catalyses a ubiquinone + NADH + 5 H(+)(in) = a ubiquinol + NAD(+) + 4 H(+)(out). Core subunit of the mitochondrial membrane respiratory chain NADH dehydrogenase (Complex I) that is believed to belong to the minimal assembly required for catalysis. Complex I functions in the transfer of electrons from NADH to the respiratory chain. The immediate electron acceptor for the enzyme is believed to be ubiquinone. This is NADH-ubiquinone oxidoreductase chain 2 (ND2) from Chlamydomonas reinhardtii (Chlamydomonas smithii).